We begin with the raw amino-acid sequence, 379 residues long: Glutamate 5-kinase (379 aa).

Residue K15 coordinates ATP. The substrate site is built by S56, D143, and N155. 175–176 (SD) contributes to the ATP binding site. Residues 281–358 (KGTLTIDAGA…CDAAQILGIS (78 aa)) enclose the PUA domain.

The protein belongs to the glutamate 5-kinase family.

It localises to the cytoplasm. It catalyses the reaction L-glutamate + ATP = L-glutamyl 5-phosphate + ADP. It functions in the pathway amino-acid biosynthesis; L-proline biosynthesis; L-glutamate 5-semialdehyde from L-glutamate: step 1/2. In terms of biological role, catalyzes the transfer of a phosphate group to glutamate to form L-glutamate 5-phosphate. The protein is Glutamate 5-kinase of Nitrobacter hamburgensis (strain DSM 10229 / NCIMB 13809 / X14).